We begin with the raw amino-acid sequence, 181 residues long: Ribulose bisphosphate carboxylase small subunit 2B, chloroplastic (181 aa).

A chloroplast-targeting transit peptide spans 1 to 54; that stretch reads MASSMFSSTAVVTSPAQATMVAPFTGLKSSASFPVTRKANNDITSITSNGGRVS.

It belongs to the RuBisCO small chain family. As to quaternary structure, heterohexadecamer of 8 large and 8 small subunits.

Its subcellular location is the plastid. The protein resides in the chloroplast. Its function is as follows. RuBisCO catalyzes two reactions: the carboxylation of D-ribulose 1,5-bisphosphate, the primary event in carbon dioxide fixation, as well as the oxidative fragmentation of the pentose substrate. Both reactions occur simultaneously and in competition at the same active site. Although the small subunit is not catalytic it is essential for maximal activity. The sequence is that of Ribulose bisphosphate carboxylase small subunit 2B, chloroplastic (RBCS-2B) from Arabidopsis thaliana (Mouse-ear cress).